A 106-amino-acid chain; its full sequence is UPF0145 protein Pfl01_1745 (106 aa).

The protein belongs to the UPF0145 family.

The protein is UPF0145 protein Pfl01_1745 of Pseudomonas fluorescens (strain Pf0-1).